The following is a 156-amino-acid chain: Cell division protein SepF (156 aa).

It belongs to the SepF family. Homodimer. Interacts with FtsZ.

It localises to the cytoplasm. In terms of biological role, cell division protein that is part of the divisome complex and is recruited early to the Z-ring. Probably stimulates Z-ring formation, perhaps through the cross-linking of FtsZ protofilaments. Its function overlaps with FtsA. The chain is Cell division protein SepF from Ruminiclostridium cellulolyticum (strain ATCC 35319 / DSM 5812 / JCM 6584 / H10) (Clostridium cellulolyticum).